A 269-amino-acid chain; its full sequence is tRNA uridine(34) hydroxylase (269 aa).

In terms of domain architecture, Rhodanese spans 121-214 (SQPDVLVIDT…YLERTHNKNG (94 aa)). The active-site Cysteine persulfide intermediate is cysteine 174.

Belongs to the TrhO family.

It carries out the reaction uridine(34) in tRNA + AH2 + O2 = 5-hydroxyuridine(34) in tRNA + A + H2O. Catalyzes oxygen-dependent 5-hydroxyuridine (ho5U) modification at position 34 in tRNAs. This is tRNA uridine(34) hydroxylase from Wolbachia sp. subsp. Brugia malayi (strain TRS).